The following is a 711-amino-acid chain: Mitochondrial intermediate peptidase (711 aa).

The transit peptide at 1 to 33 (MLLAAGARYARRLCGRGAAAALQGRTGRSCARD) directs the protein to the mitochondrion. The residue at position 124 (Lys-124) is an N6-acetyllysine. A Zn(2+)-binding site is contributed by His-493. The active site involves Glu-494. Zn(2+) contacts are provided by His-497 and His-500.

It belongs to the peptidase M3 family. In terms of assembly, monomer. Requires Zn(2+) as cofactor.

The protein resides in the mitochondrion matrix. The enzyme catalyses Release of an N-terminal octapeptide as second stage of processing of some proteins imported into the mitochondrion.. Activity is divalent cation-dependent. It is stimulated by manganese, magnesium or calcium ions and reversibly inhibited by zinc, cobalt and iron. Cleaves proteins, imported into the mitochondrion, to their mature size. The sequence is that of Mitochondrial intermediate peptidase (Mipep) from Mus musculus (Mouse).